The sequence spans 262 residues: tRNA pseudouridine synthase A (262 aa).

Asp-52 functions as the Nucleophile in the catalytic mechanism. Tyr-103 is a binding site for substrate.

The protein belongs to the tRNA pseudouridine synthase TruA family.

The enzyme catalyses uridine(38/39/40) in tRNA = pseudouridine(38/39/40) in tRNA. Its function is as follows. Formation of pseudouridine at positions 38, 39 and 40 in the anticodon stem and loop of transfer RNAs. The chain is tRNA pseudouridine synthase A from Methanococcus maripaludis (strain DSM 14266 / JCM 13030 / NBRC 101832 / S2 / LL).